Reading from the N-terminus, the 237-residue chain is Phosphoadenosine 5'-phosphosulfate reductase (237 aa).

Cys-231 functions as the Nucleophile; cysteine thiosulfonate intermediate in the catalytic mechanism.

The protein belongs to the PAPS reductase family. CysH subfamily.

It is found in the cytoplasm. The catalysed reaction is [thioredoxin]-disulfide + sulfite + adenosine 3',5'-bisphosphate + 2 H(+) = [thioredoxin]-dithiol + 3'-phosphoadenylyl sulfate. The protein operates within sulfur metabolism; hydrogen sulfide biosynthesis; sulfite from sulfate: step 3/3. Its function is as follows. Catalyzes the formation of sulfite from phosphoadenosine 5'-phosphosulfate (PAPS) using thioredoxin as an electron donor. This chain is Phosphoadenosine 5'-phosphosulfate reductase, found in Xylella fastidiosa (strain M23).